Consider the following 306-residue polypeptide: Lipoyl synthase (306 aa).

The [4Fe-4S] cluster site is built by Cys-55, Cys-60, Cys-66, Cys-81, Cys-85, Cys-88, and Ser-294. The region spanning 67-283 (WNHRTATFLL…RAYALARGFR (217 aa)) is the Radical SAM core domain.

It belongs to the radical SAM superfamily. Lipoyl synthase family. [4Fe-4S] cluster is required as a cofactor.

It is found in the cytoplasm. It catalyses the reaction [[Fe-S] cluster scaffold protein carrying a second [4Fe-4S](2+) cluster] + N(6)-octanoyl-L-lysyl-[protein] + 2 oxidized [2Fe-2S]-[ferredoxin] + 2 S-adenosyl-L-methionine + 4 H(+) = [[Fe-S] cluster scaffold protein] + N(6)-[(R)-dihydrolipoyl]-L-lysyl-[protein] + 4 Fe(3+) + 2 hydrogen sulfide + 2 5'-deoxyadenosine + 2 L-methionine + 2 reduced [2Fe-2S]-[ferredoxin]. It participates in protein modification; protein lipoylation via endogenous pathway; protein N(6)-(lipoyl)lysine from octanoyl-[acyl-carrier-protein]: step 2/2. Its function is as follows. Catalyzes the radical-mediated insertion of two sulfur atoms into the C-6 and C-8 positions of the octanoyl moiety bound to the lipoyl domains of lipoate-dependent enzymes, thereby converting the octanoylated domains into lipoylated derivatives. The polypeptide is Lipoyl synthase (Chloroflexus aggregans (strain MD-66 / DSM 9485)).